The following is a 402-amino-acid chain: MAPTTTMGSALYPLGEMRRSQRADGLAAVLAIGTANPPNCVTQEEFPDFYFRVTNSDHLTALKDKFKRICQEMGVQRRYLHHTEEMLSAHPEFVDRDAPSLDARLDIAADAVPELAAEAAKKAIAEWGRPAADITHLVVTTNSGAHVPGVDFRLVPLLGLRPSVRRTMLHLNGCFAGCAALRLAKDLAENSRGARVLVVAAELTLMYFTGPDEGCFRTLLVQGLFGDGAAAVIVGADADDVERPLFEIVSAAQTIIPESDHALNMRFTERRLDGVLGRQVPGLIGDNVERCLLDMFGPLLGGDGGGGWNDLFWAVHPGSSTIMDQVDAALGLEPGKLAASRRVLSDYGNMSGATVIFALDELRRQRKEAAAAGEWPELGVMMAFGPGMTVDAMLLHATSHVN.

Catalysis depends on cysteine 174, which acts as the Acyl-thioester intermediate.

The protein belongs to the thiolase-like superfamily. Chalcone/stilbene synthases family. In terms of assembly, homodimer.

The enzyme catalyses 2 4-coumaroyl-CoA + malonyl-CoA + H2O + H(+) = bisdemethoxycurcumin + 2 CO2 + 3 CoA. It functions in the pathway secondary metabolite biosynthesis; flavonoid biosynthesis. In terms of biological role, plant-specific type III polyketide synthase (PKS) that catalyzes the one-pot formation of the C6-C7-C6 diarylheptanoid scaffold of bisdemethoxycurcumin by the condensation of two molecules of 4-coumaroyl-CoA and one molecule of malonyl-CoA. This chain is Bisdemethoxycurcumin synthase, found in Oryza sativa subsp. japonica (Rice).